Consider the following 52-residue polypeptide: UPF0181 protein NTHI1697 (52 aa).

This sequence belongs to the UPF0181 family.

In Haemophilus influenzae (strain 86-028NP), this protein is UPF0181 protein NTHI1697.